The chain runs to 325 residues: Interleukin-10 receptor subunit beta (325 aa).

Positions 1 to 19 are cleaved as a signal peptide; sequence MAWSLGSWLGGCLLVSALG. Topologically, residues 20-220 are extracellular; that stretch reads MVPPPENVRM…QTTHDETVPS (201 aa). 2 Fibronectin type-III domains span residues 23-111 and 114-216; these read PPEN…VDDT and GPPG…THDE. 4 N-linked (GlcNAc...) asparagine glycosylation sites follow: N49, N68, N102, and N161. A disulfide bridge connects residues C66 and C74. A disulfide bond links C188 and C209. Residues 221-242 form a helical membrane-spanning segment; the sequence is WMVAVILMASVFMVCLALLGCF. The Cytoplasmic portion of the chain corresponds to 243–325; it reads ALLWCVYKKT…GTPPGQGPQS (83 aa). Residues 301–325 form a disordered region; it reads DSESGKQNPGDSCSLGTPPGQGPQS. The segment covering 305 to 315 has biased composition (polar residues); sequence GKQNPGDSCSL.

Belongs to the type II cytokine receptor family. In terms of assembly, heterodimer with IFNLR1.

It localises to the membrane. Shared cell surface receptor required for the activation of five class 2 cytokines: IL10, IL22, IL26, IL28, and IFNL1. The IFNLR1/IL10RB dimer is a receptor for the cytokine ligands IFNL2 and IFNL3 and mediates their antiviral activity. The ligand/receptor complex stimulate the activation of the JAK/STAT signaling pathway leading to the expression of IFN-stimulated genes (ISG), which contribute to the antiviral state. This Homo sapiens (Human) protein is Interleukin-10 receptor subunit beta (IL10RB).